Consider the following 397-residue polypeptide: Cystinosin (397 aa).

Residues M1 to A24 form the signal peptide. Over Q25–R126 the chain is Lumenal. 2 N-linked (GlcNAc...) asparagine glycosylation sites follow: N43 and N86. The helical transmembrane segment at A127–F147 threads the bilayer. Residues S132–F187 form the PQ-loop 1 domain. Over Y148–F167 the chain is Cytoplasmic. A helical transmembrane segment spans residues L168–I188. Over E189–D210 the chain is Lumenal. Residues V211–Y231 form a helical membrane-spanning segment. Over Q232–S239 the chain is Cytoplasmic. A helical transmembrane segment spans residues F240 to A260. At G261–S263 the chain is on the lumenal side. The chain crosses the membrane as a helical span at residues V264 to I284. The 57-residue stretch at L271–N327 folds into the PQ-loop 2 domain. Topologically, residues K285–W302 are cytoplasmic. The helical transmembrane segment at S303–L323 threads the bilayer. Topologically, residues N324–K340 are lumenal. Residues F341 to F361 form a helical membrane-spanning segment. Topologically, residues Y362–Y397 are cytoplasmic. Positions L373–E385 are enriched in polar residues. A disordered region spans residues L373 to Y397.

The protein belongs to the cystinosin family.

It localises to the lysosome membrane. It carries out the reaction L-cystine(out) + H(+)(out) = L-cystine(in) + H(+)(in). Functionally, cystine/H(+) symporter that mediates export of cystine, the oxidized dimer of cysteine, from lysosomes. Involved in cysteine homeostasis during periods of fasting, which indirectly regulates mTORC1-mediated signaling by supporting de novo CoA synthesis, the TCA cycle and amino acid metabolism during periods of food shortage. Important for maintaining autophagy, and for development and survival during periods of fasting. This chain is Cystinosin, found in Drosophila melanogaster (Fruit fly).